Reading from the N-terminus, the 490-residue chain is 3-octaprenyl-4-hydroxybenzoate carboxy-lyase (490 aa).

N172 contributes to the Mn(2+) binding site. Residues 175–177 (IYR), 189–191 (RWL), and 194–195 (RG) contribute to the prenylated FMN site. Residue E238 coordinates Mn(2+). Catalysis depends on D287, which acts as the Proton donor.

Belongs to the UbiD family. As to quaternary structure, homohexamer. Prenylated FMN is required as a cofactor. Mn(2+) serves as cofactor.

It is found in the cell membrane. The catalysed reaction is a 4-hydroxy-3-(all-trans-polyprenyl)benzoate + H(+) = a 2-(all-trans-polyprenyl)phenol + CO2. The protein operates within cofactor biosynthesis; ubiquinone biosynthesis. In terms of biological role, catalyzes the decarboxylation of 3-octaprenyl-4-hydroxy benzoate to 2-octaprenylphenol, an intermediate step in ubiquinone biosynthesis. In Saccharophagus degradans (strain 2-40 / ATCC 43961 / DSM 17024), this protein is 3-octaprenyl-4-hydroxybenzoate carboxy-lyase.